We begin with the raw amino-acid sequence, 125 residues long: Small ribosomal subunit protein uS12 (125 aa).

At Asp-89 the chain carries 3-methylthioaspartic acid. The disordered stretch occupies residues 100–125 (GSLDTQGVQNRKQARSKYGAKRPKKA). Positions 111–125 (KQARSKYGAKRPKKA) are enriched in basic residues.

The protein belongs to the universal ribosomal protein uS12 family. In terms of assembly, part of the 30S ribosomal subunit. Contacts proteins S8 and S17. May interact with IF1 in the 30S initiation complex.

In terms of biological role, with S4 and S5 plays an important role in translational accuracy. Functionally, interacts with and stabilizes bases of the 16S rRNA that are involved in tRNA selection in the A site and with the mRNA backbone. Located at the interface of the 30S and 50S subunits, it traverses the body of the 30S subunit contacting proteins on the other side and probably holding the rRNA structure together. The combined cluster of proteins S8, S12 and S17 appears to hold together the shoulder and platform of the 30S subunit. The sequence is that of Small ribosomal subunit protein uS12 from Thioalkalivibrio sulfidiphilus (strain HL-EbGR7).